A 293-amino-acid chain; its full sequence is Pyridoxal 5'-phosphate synthase subunit PdxS (293 aa).

A D-ribose 5-phosphate-binding site is contributed by Asp23. Lys80 acts as the Schiff-base intermediate with D-ribose 5-phosphate in catalysis. Gly152 lines the D-ribose 5-phosphate pocket. Arg164 lines the D-glyceraldehyde 3-phosphate pocket. Residues Gly213 and Gly234 to Ser235 each bind D-ribose 5-phosphate.

It belongs to the PdxS/SNZ family. As to quaternary structure, in the presence of PdxT, forms a dodecamer of heterodimers.

It catalyses the reaction aldehydo-D-ribose 5-phosphate + D-glyceraldehyde 3-phosphate + L-glutamine = pyridoxal 5'-phosphate + L-glutamate + phosphate + 3 H2O + H(+). It participates in cofactor biosynthesis; pyridoxal 5'-phosphate biosynthesis. In terms of biological role, catalyzes the formation of pyridoxal 5'-phosphate from ribose 5-phosphate (RBP), glyceraldehyde 3-phosphate (G3P) and ammonia. The ammonia is provided by the PdxT subunit. Can also use ribulose 5-phosphate and dihydroxyacetone phosphate as substrates, resulting from enzyme-catalyzed isomerization of RBP and G3P, respectively. The sequence is that of Pyridoxal 5'-phosphate synthase subunit PdxS from Dehalococcoides mccartyi (strain ATCC BAA-2100 / JCM 16839 / KCTC 5957 / BAV1).